The following is a 276-amino-acid chain: Formamidopyrimidine-DNA glycosylase (276 aa).

Residue Pro-2 is the Schiff-base intermediate with DNA of the active site. The active-site Proton donor is Glu-3. The Proton donor; for beta-elimination activity role is filled by Lys-58. DNA-binding residues include His-94, Arg-112, and Arg-157. The FPG-type zinc finger occupies 242 to 276; the sequence is FVYDRAGEPCRVCGAPIRQIVQGQRSTYFCPNCQR. The Proton donor; for delta-elimination activity role is filled by Arg-266.

This sequence belongs to the FPG family. Monomer. Requires Zn(2+) as cofactor.

The catalysed reaction is Hydrolysis of DNA containing ring-opened 7-methylguanine residues, releasing 2,6-diamino-4-hydroxy-5-(N-methyl)formamidopyrimidine.. It catalyses the reaction 2'-deoxyribonucleotide-(2'-deoxyribose 5'-phosphate)-2'-deoxyribonucleotide-DNA = a 3'-end 2'-deoxyribonucleotide-(2,3-dehydro-2,3-deoxyribose 5'-phosphate)-DNA + a 5'-end 5'-phospho-2'-deoxyribonucleoside-DNA + H(+). Functionally, involved in base excision repair of DNA damaged by oxidation or by mutagenic agents. Acts as a DNA glycosylase that recognizes and removes damaged bases. Has a preference for oxidized purines, such as 7,8-dihydro-8-oxoguanine (8-oxoG). Has AP (apurinic/apyrimidinic) lyase activity and introduces nicks in the DNA strand. Cleaves the DNA backbone by beta-delta elimination to generate a single-strand break at the site of the removed base with both 3'- and 5'-phosphates. The chain is Formamidopyrimidine-DNA glycosylase from Burkholderia pseudomallei (strain 1710b).